Consider the following 574-residue polypeptide: Sulfate adenylyltransferase (574 aa).

Residues Met-1–Tyr-169 form an N-terminal region. Residues Asp-170–Thr-394 form a catalytic region. Residue Gln-197 participates in sulfate binding. ATP is bound by residues Gln-197–Asn-200 and Gly-291–His-294. Catalysis depends on residues Thr-198, Arg-199, and Asn-200. Residue Arg-199 participates in sulfate binding. Ala-295 contributes to the sulfate binding site. Val-333 contacts ATP. The tract at residues Gln-395 to Ser-574 is allosteric regulation domain; adenylyl-sulfate kinase-like. 3'-phosphoadenylyl sulfate is bound by residues Asp-434–Arg-437, Arg-451, Ile-477–Ala-478, and Arg-516.

In the N-terminal section; belongs to the sulfate adenylyltransferase family. It in the C-terminal section; belongs to the APS kinase family. In terms of assembly, homohexamer. Dimer of trimers.

The protein localises to the cytoplasm. The catalysed reaction is sulfate + ATP + H(+) = adenosine 5'-phosphosulfate + diphosphate. The protein operates within sulfur metabolism; hydrogen sulfide biosynthesis; sulfite from sulfate: step 1/3. With respect to regulation, allosterically inhibited by 3'-phosphoadenosine 5'-phosphosulfate (PAPS). Functionally, catalyzes the first intracellular reaction of sulfate assimilation, forming adenosine-5'-phosphosulfate (APS) from inorganic sulfate and ATP. Plays an important role in sulfate activation as a component of the biosynthesis pathway of sulfur-containing amino acids. In Neosartorya fischeri (strain ATCC 1020 / DSM 3700 / CBS 544.65 / FGSC A1164 / JCM 1740 / NRRL 181 / WB 181) (Aspergillus fischerianus), this protein is Sulfate adenylyltransferase.